The chain runs to 182 residues: MSVIAGEIVEPYAAALMSLAQSKDLTDKFAEDVRSLINILDESPEFKQFVGNPVIKQEDKKAVVKRMLGEQVDPLMRNFLMLLIDKGRITFLEQIGKQYLALLRELNQTVLAEVTSTVELNENQKNTIRERVKSMTSAREVEIETKVDPSILGGVIIKIGSQIIDSSLQGQLRRIGISLKTL.

It belongs to the ATPase delta chain family. F-type ATPases have 2 components, F(1) - the catalytic core - and F(0) - the membrane proton channel. F(1) has five subunits: alpha(3), beta(3), gamma(1), delta(1), epsilon(1). CF(0) has four main subunits: a(1), b(1), b'(1) and c(10-14). The alpha and beta chains form an alternating ring which encloses part of the gamma chain. F(1) is attached to F(0) by a central stalk formed by the gamma and epsilon chains, while a peripheral stalk is formed by the delta, b and b' chains.

It localises to the cellular thylakoid membrane. Its function is as follows. F(1)F(0) ATP synthase produces ATP from ADP in the presence of a proton or sodium gradient. F-type ATPases consist of two structural domains, F(1) containing the extramembraneous catalytic core and F(0) containing the membrane proton channel, linked together by a central stalk and a peripheral stalk. During catalysis, ATP synthesis in the catalytic domain of F(1) is coupled via a rotary mechanism of the central stalk subunits to proton translocation. This protein is part of the stalk that links CF(0) to CF(1). It either transmits conformational changes from CF(0) to CF(1) or is implicated in proton conduction. This is ATP synthase subunit delta from Trichodesmium erythraeum (strain IMS101).